A 465-amino-acid polypeptide reads, in one-letter code: Glutamate--tRNA ligase (465 aa).

The 'HIGH' region signature appears at 11 to 21; that stretch reads PSPTGFIHLGN. The 'KMSKS' region signature appears at 243 to 247; the sequence is KMSKR. Lys246 provides a ligand contact to ATP.

It belongs to the class-I aminoacyl-tRNA synthetase family. Glutamate--tRNA ligase type 1 subfamily. In terms of assembly, monomer.

The protein resides in the cytoplasm. The enzyme catalyses tRNA(Glu) + L-glutamate + ATP = L-glutamyl-tRNA(Glu) + AMP + diphosphate. In terms of biological role, catalyzes the attachment of glutamate to tRNA(Glu) in a two-step reaction: glutamate is first activated by ATP to form Glu-AMP and then transferred to the acceptor end of tRNA(Glu). The chain is Glutamate--tRNA ligase from Cupriavidus metallidurans (strain ATCC 43123 / DSM 2839 / NBRC 102507 / CH34) (Ralstonia metallidurans).